We begin with the raw amino-acid sequence, 118 residues long: MKVLLYIAASCLMLLALNVSAENTQQEEEDYDYGTDTCPFPVLANKTNKAKFVGCHQKCNGGDQKLTDGTACYVVERKVWDRMTPMLWYSCPLGECKNGVCEDLRKKEECRKGNGEEK.

The signal sequence occupies residues 1 to 21; it reads MKVLLYIAASCLMLLALNVSA. 4 disulfides stabilise this stretch: C38/C59, C55/C96, C72/C101, and C91/C110. N45 carries N-linked (GlcNAc...) asparagine glycosylation.

The protein resides in the secreted. Its function is as follows. Salivary chemokine-binding protein which binds to host chemokines CCL1, CCL3, CCL5 and CCL22. This chain is Evasin P546, found in Amblyomma cajennense (Cayenne tick).